A 336-amino-acid polypeptide reads, in one-letter code: Probable deoxyhypusine synthase (336 aa).

The active-site Nucleophile is the K308.

The protein belongs to the deoxyhypusine synthase family. It depends on NAD(+) as a cofactor.

It catalyses the reaction [eIF5A protein]-L-lysine + spermidine = [eIF5A protein]-deoxyhypusine + propane-1,3-diamine. The protein operates within protein modification; eIF5A hypusination. In terms of biological role, catalyzes the NAD-dependent oxidative cleavage of spermidine and the subsequent transfer of the butylamine moiety of spermidine to the epsilon-amino group of a specific lysine residue of the eIF-5A precursor protein to form the intermediate deoxyhypusine residue. This Pyrococcus furiosus (strain ATCC 43587 / DSM 3638 / JCM 8422 / Vc1) protein is Probable deoxyhypusine synthase.